An 85-amino-acid chain; its full sequence is Large ribosomal subunit protein bL27 (85 aa).

Residues 1 to 24 (MAHKKGQGSSRNGRDSNAQRRGVK) form a disordered region.

Belongs to the bacterial ribosomal protein bL27 family.

The polypeptide is Large ribosomal subunit protein bL27 (Syntrophus aciditrophicus (strain SB)).